The following is a 108-amino-acid chain: Large ribosomal subunit protein uL23 (108 aa).

Belongs to the universal ribosomal protein uL23 family. Part of the 50S ribosomal subunit. Contacts protein L29, and trigger factor when it is bound to the ribosome.

Functionally, one of the early assembly proteins it binds 23S rRNA. One of the proteins that surrounds the polypeptide exit tunnel on the outside of the ribosome. Forms the main docking site for trigger factor binding to the ribosome. The sequence is that of Large ribosomal subunit protein uL23 from Leptothrix cholodnii (strain ATCC 51168 / LMG 8142 / SP-6) (Leptothrix discophora (strain SP-6)).